The primary structure comprises 244 residues: Probable phosphatase CA_C0509 (244 aa).

Residues H8, H10, H16, H41, E74, H102, H132, D193, and H195 each coordinate Zn(2+).

Belongs to the PHP family. It depends on Zn(2+) as a cofactor.

In Clostridium acetobutylicum (strain ATCC 824 / DSM 792 / JCM 1419 / IAM 19013 / LMG 5710 / NBRC 13948 / NRRL B-527 / VKM B-1787 / 2291 / W), this protein is Probable phosphatase CA_C0509.